Here is a 145-residue protein sequence, read N- to C-terminus: AN1-type zinc finger protein 2A (145 aa).

2 AN1-type zinc fingers span residues 4–52 (PDLG…QKDV) and 94–142 (KIFT…RPTI). Positions 10, 15, 25, 28, 33, 36, 42, 44, 100, 105, 115, 118, 123, 126, 132, and 134 each coordinate Zn(2+).

The protein localises to the cytoplasm. Its subcellular location is the nucleus. This Homo sapiens (Human) protein is AN1-type zinc finger protein 2A (ZFAND2A).